The chain runs to 990 residues: MSSNTVAEFATELKKSPATLLDQLKAAGVGKAALSDALTESDKQRLLAYLQASHGTTSVDRKKITLVKKSTSEIKQADATGKARTIQVEVRKKRTFVKRDDAQEGAADGAGSAAFAEPEHPAPAAQHDVPEAPAEQAQADAAPAADGAAPALSSEDQELARREEQARHQAELIRRQEAELAAKRAAREAREKREREAEERAAAYAAQEAEKKAAASAVKQVATREQAAEATARNAAQLQARAKAAAESKARSDEEAARAADLDARRRKAEAEAAAIRSMLATPKKAVMVAKKPEPPPKPVPKPAAAAGDAKKGTLHKPAVGATRTAAGAARAGAAAGAPGAGKEVKSAKLSSSWAGDPAKKKEIKTRGDSSGGVGRNNWRGGPRGRRGDSRDQRDEHLQAAPAETRIIEVHVPETITVAEVAHKMSIKASEVIKALMKMGQMVTINQPLDQDTAMIVVEELGHKAVVAALDDPEAFADDDVAQQSIEVLPRAPVVTVMGHVDHGKTSLLDYIRRAKVAASEAGGITQHIGAYHVQTPRGMVSFLDTPGHEAFTAMRARGAQATDIVILVVAADDGVMPQTREAIKHAKAAGVPIVVAITKADKPDANLDRVKQELIGEQVVPEDYGGDSPFVAVSSKTGQGIDALLEHVLLQADVMELKAPVDALAKGLVIEAQLDKGRGPVATVLVQSGTLKVGDVVLAGQTFGRVRAMLDENGRPAKTAGPSIPVEIQGLTEVPQAGDEFMVLTDERRAREIATYRAGRFRNTKLAKQQAAKLEHVFADMTAGEVKMLPIIVKADVQGSQEALAQSLLKLSTDEVKVQLVYAAVGAISESDINLAIASKAVVIGFNVRADAGARKLAEGNGVALHYYSIIYDAVDELRVAMSGMLAPEQREEIIGTAEIRTVFTASKIGTVAGSYITSGMVHRNARFRLLRANVVVHTGEVDSIKRLKDDVREVKEGFECGIKLKNYSDILEGDQLEFFDIKQIARTL.

The disordered stretch occupies residues 92-402; sequence KKRTFVKRDD…QRDEHLQAAP (311 aa). 2 stretches are compositionally biased toward low complexity: residues 104 to 116 and 131 to 151; these read EGAA…AAFA and EAPA…AAPA. Positions 158 to 201 are enriched in basic and acidic residues; sequence ELARREEQARHQAELIRRQEAELAAKRAAREAREKREREAEERA. The segment covering 223–243 has biased composition (low complexity); it reads TREQAAEATARNAAQLQARAK. The segment covering 244–264 has biased composition (basic and acidic residues); that stretch reads AAAESKARSDEEAARAADLDA. Low complexity-rich tracts occupy residues 281 to 290 and 318 to 342; these read ATPKKAVMVA and PAVG…PGAG. Composition is skewed to basic and acidic residues over residues 358-368 and 386-398; these read PAKKKEIKTRG and RRGD…DEHL. The tr-type G domain maps to 490–659; that stretch reads PRAPVVTVMG…LLQADVMELK (170 aa). The segment at 499–506 is G1; the sequence is GHVDHGKT. 499-506 is a binding site for GTP; that stretch reads GHVDHGKT. The segment at 524 to 528 is G2; that stretch reads GITQH. Residues 545-548 are G3; it reads DTPG. Residues 545-549 and 599-602 each bind GTP; these read DTPGH and TKAD. The segment at 599 to 602 is G4; that stretch reads TKAD. Residues 635–637 are G5; sequence SSK.

This sequence belongs to the TRAFAC class translation factor GTPase superfamily. Classic translation factor GTPase family. IF-2 subfamily.

It localises to the cytoplasm. Its function is as follows. One of the essential components for the initiation of protein synthesis. Protects formylmethionyl-tRNA from spontaneous hydrolysis and promotes its binding to the 30S ribosomal subunits. Also involved in the hydrolysis of GTP during the formation of the 70S ribosomal complex. The sequence is that of Translation initiation factor IF-2 from Verminephrobacter eiseniae (strain EF01-2).